The chain runs to 133 residues: Small ribosomal subunit protein uS9 (133 aa).

The tract at residues 101–133 (MKPKGLLTRDPREVERKKYGLKKARRAPQFSKR) is disordered. A compositionally biased stretch (basic and acidic residues) spans 107-118 (LTRDPREVERKK). Residues 119–133 (YGLKKARRAPQFSKR) show a composition bias toward basic residues.

It belongs to the universal ribosomal protein uS9 family.

This Deinococcus radiodurans (strain ATCC 13939 / DSM 20539 / JCM 16871 / CCUG 27074 / LMG 4051 / NBRC 15346 / NCIMB 9279 / VKM B-1422 / R1) protein is Small ribosomal subunit protein uS9.